Reading from the N-terminus, the 149-residue chain is Calmodulin-2 (149 aa).

EF-hand domains are found at residues 8 to 43 (DQIS…LGQN), 44 to 79 (PTEA…KMKD), 81 to 116 (DSEE…LGEK), and 117 to 149 (LTDE…MMAK). Ca(2+) contacts are provided by aspartate 21, aspartate 23, aspartate 25, cysteine 27, glutamate 32, aspartate 57, aspartate 59, asparagine 61, threonine 63, glutamate 68, aspartate 94, aspartate 96, asparagine 98, glutamate 105, aspartate 130, aspartate 132, aspartate 134, glutamine 136, and glutamate 141.

The protein belongs to the calmodulin family. Interacts with KCBP and CIP111. Binds to IQD1 and IQD20.

It localises to the cytoplasm. It is found in the cytoskeleton. Its function is as follows. Calmodulin mediates the control of a large number of enzymes, ion channels and other proteins by Ca(2+). Among the enzymes to be stimulated by the calmodulin-Ca(2+) complex are a number of protein kinases and phosphatases. The chain is Calmodulin-2 (CAM2) from Arabidopsis thaliana (Mouse-ear cress).